Here is a 184-residue protein sequence, read N- to C-terminus: Gastrokine-2 (184 aa).

Residues 1-20 (MKPLVAFLVVLSIFGIQSQA) form the signal peptide. The 98-residue stretch at 54 to 151 (HSGSCSSTTI…LCKHMPLYEG (98 aa)) folds into the BRICHOS domain. An intrachain disulfide couples Cys-81 to Cys-143.

As to quaternary structure, heterodimer with TFF1; disulfide linked. Interacts with TFF2. As to expression, stomach foveolar epithelium and duodenal Brunner's glands.

Its subcellular location is the secreted. The protein localises to the golgi apparatus. In Mus musculus (Mouse), this protein is Gastrokine-2 (Gkn2).